Consider the following 360-residue polypeptide: Peptide chain release factor 1 (360 aa).

Position 235 is an N5-methylglutamine (glutamine 235). A disordered region spans residues 284–313 (AKRQQAEASTRRNLLGSGDRSDRNRTYNFP).

Belongs to the prokaryotic/mitochondrial release factor family. Methylated by PrmC. Methylation increases the termination efficiency of RF1.

It is found in the cytoplasm. Peptide chain release factor 1 directs the termination of translation in response to the peptide chain termination codons UAG and UAA. This Salmonella agona (strain SL483) protein is Peptide chain release factor 1.